The primary structure comprises 752 residues: Multifunctional tryptophan biosynthesis protein (752 aa).

One can recognise a Glutamine amidotransferase type-1 domain in the interval 3 to 202 (FTLLIDNYDS…IQMKGGKWGG (200 aa)). Residue 58–60 (GPG) coordinates L-glutamine. The active-site Nucleophile; for GATase activity is cysteine 86. L-glutamine is bound at residue 136–137 (SL). Catalysis depends on for GATase activity residues histidine 176 and glutamate 178. Positions 231–495 (ILNRIHAQRL…DTKAFLRSLI (265 aa)) are indole-3-glycerol phosphate synthase. An N-(5'-phosphoribosyl)anthranilate isomerase region spans residues 509–752 (LVKICGIRST…VEAFVKAVRG (244 aa)).

It catalyses the reaction N-(5-phospho-beta-D-ribosyl)anthranilate = 1-(2-carboxyphenylamino)-1-deoxy-D-ribulose 5-phosphate. The enzyme catalyses 1-(2-carboxyphenylamino)-1-deoxy-D-ribulose 5-phosphate + H(+) = (1S,2R)-1-C-(indol-3-yl)glycerol 3-phosphate + CO2 + H2O. It carries out the reaction chorismate + L-glutamine = anthranilate + pyruvate + L-glutamate + H(+). The protein operates within amino-acid biosynthesis; L-tryptophan biosynthesis; L-tryptophan from chorismate: step 1/5. Its pathway is amino-acid biosynthesis; L-tryptophan biosynthesis; L-tryptophan from chorismate: step 3/5. It participates in amino-acid biosynthesis; L-tryptophan biosynthesis; L-tryptophan from chorismate: step 4/5. Its function is as follows. Trifunctional enzyme bearing the Gln amidotransferase (GATase) domain of anthranilate synthase, indole-glycerolphosphate synthase, and phosphoribosylanthranilate isomerase activities. In Cryptococcus neoformans var. neoformans serotype D (strain B-3501A) (Filobasidiella neoformans), this protein is Multifunctional tryptophan biosynthesis protein (TRP1).